The following is a 337-amino-acid chain: DNA-directed RNA polymerase subunit alpha (337 aa).

Positions 1-233 (MIQKNWQELI…DQLSIFVNFE (233 aa)) are alpha N-terminal domain (alpha-NTD). The alpha C-terminal domain (alpha-CTD) stretch occupies residues 249–337 (FNPVLLKKVD…DLAKRYEDQY (89 aa)).

Belongs to the RNA polymerase alpha chain family. In terms of assembly, homodimer. The RNAP catalytic core consists of 2 alpha, 1 beta, 1 beta' and 1 omega subunit. When a sigma factor is associated with the core the holoenzyme is formed, which can initiate transcription.

It catalyses the reaction RNA(n) + a ribonucleoside 5'-triphosphate = RNA(n+1) + diphosphate. DNA-dependent RNA polymerase catalyzes the transcription of DNA into RNA using the four ribonucleoside triphosphates as substrates. In Brucella canis (strain ATCC 23365 / NCTC 10854 / RM-666), this protein is DNA-directed RNA polymerase subunit alpha.